Here is a 357-residue protein sequence, read N- to C-terminus: Alanine racemase (357 aa).

The Proton acceptor; specific for D-alanine role is filled by lysine 34. Residue lysine 34 is modified to N6-(pyridoxal phosphate)lysine. Arginine 129 provides a ligand contact to substrate. Catalysis depends on tyrosine 254, which acts as the Proton acceptor; specific for L-alanine. Methionine 302 lines the substrate pocket.

Belongs to the alanine racemase family. It depends on pyridoxal 5'-phosphate as a cofactor.

The enzyme catalyses L-alanine = D-alanine. Its pathway is amino-acid biosynthesis; D-alanine biosynthesis; D-alanine from L-alanine: step 1/1. In terms of biological role, catalyzes the interconversion of L-alanine and D-alanine. Likely plays an important role in supplying D-alanine, which is an indispensable constituent in the biosynthesis of bacterial cell-wall peptidoglycan. The protein is Alanine racemase of Aeromonas hydrophila subsp. hydrophila (strain ATCC 7966 / DSM 30187 / BCRC 13018 / CCUG 14551 / JCM 1027 / KCTC 2358 / NCIMB 9240 / NCTC 8049).